Here is a 418-residue protein sequence, read N- to C-terminus: Cyclin-dependent kinase 15 (418 aa).

Residues 84–369 enclose the Protein kinase domain; the sequence is YLNLEKLGEG…AQDALLHPYF (286 aa). Residues 90-98 and K113 each bind ATP; that span reads LGEGTYATV. The active-site Proton acceptor is D205.

The protein belongs to the protein kinase superfamily. CMGC Ser/Thr protein kinase family. CDC2/CDKX subfamily. Mg(2+) serves as cofactor.

The enzyme catalyses L-seryl-[protein] + ATP = O-phospho-L-seryl-[protein] + ADP + H(+). It catalyses the reaction L-threonyl-[protein] + ATP = O-phospho-L-threonyl-[protein] + ADP + H(+). Its function is as follows. Serine/threonine-protein kinase involved in the control of the eukaryotic cell cycle, whose activity is controlled by an associated cyclin. The chain is Cyclin-dependent kinase 15 (cdk15) from Danio rerio (Zebrafish).